A 333-amino-acid chain; its full sequence is Phosphate acyltransferase (333 aa).

This sequence belongs to the PlsX family. Homodimer. Probably interacts with PlsY.

It is found in the cytoplasm. It carries out the reaction a fatty acyl-[ACP] + phosphate = an acyl phosphate + holo-[ACP]. The protein operates within lipid metabolism; phospholipid metabolism. Functionally, catalyzes the reversible formation of acyl-phosphate (acyl-PO(4)) from acyl-[acyl-carrier-protein] (acyl-ACP). This enzyme utilizes acyl-ACP as fatty acyl donor, but not acyl-CoA. The polypeptide is Phosphate acyltransferase (Lactobacillus helveticus (strain DPC 4571)).